The following is a 194-amino-acid chain: MSISILKDKKLLIGICGSISSVGISSYLLYFKSFFKEIRVVMTKTAEDLIPAHTVSYFCDHVYSEHGENGKRHSHVEIGRWADIYCIIPATANILGQTANGVAMNLVATTVLAHPHNTIFFPNMNDLMWNKTVVSRNIEQLRKDGHIVIEPVEIMAFEIATGTRKPNRGLITPDKALLAIEKGFKERTKHPSLT.

The active site involves His75.

It belongs to the HFCD (homooligomeric flavin containing Cys decarboxylase) superfamily. Homododecamer. It depends on FAD as a cofactor.

It functions in the pathway antibiotic biosynthesis; mersacidin biosynthesis. Functionally, catalyzes the oxidative decarboxylation of the C-terminal cysteine residue of mersacidin to an aminoenethiol residue. In Bacillus sp. (strain HIL-Y85/54728), this protein is Mersacidin decarboxylase (mrsD).